We begin with the raw amino-acid sequence, 1087 residues long: Alpha-mannosidase G (1087 aa).

Positions 264, 266, 376, and 579 each coordinate Zn(2+). Aspartate 376 serves as the catalytic Nucleophile.

It belongs to the glycosyl hydrolase 38 family. It depends on Zn(2+) as a cofactor.

It catalyses the reaction Hydrolysis of terminal, non-reducing alpha-D-mannose residues in alpha-D-mannosides.. The chain is Alpha-mannosidase G (manG) from Dictyostelium discoideum (Social amoeba).